Consider the following 218-residue polypeptide: Eukaryotic translation initiation factor 4E-1 (218 aa).

Residues 1-11 are compositionally biased toward basic and acidic residues; sequence MQTEQPPKESQ. 2 disordered regions span residues 1-20 and 198-218; these read MQTE…SEPQ and FSAH…RMSV. A compositionally biased stretch (polar residues) spans 206-218; sequence KSGSTRAKTRMSV.

The protein belongs to the eukaryotic initiation factor 4E family. In terms of assembly, eIF4F is a multi-subunit complex, the composition of which varies with external and internal environmental conditions. It is composed of at least eIF4A, eIF4E and eIF4G. eIF4E is also known to interact with other partners.

Recognizes and binds the 7-methylguanosine-containing mRNA cap during an early step in the initiation of protein synthesis and facilitates ribosome binding by inducing the unwinding of the mRNAs secondary structures. The sequence is that of Eukaryotic translation initiation factor 4E-1 (tif451) from Schizosaccharomyces pombe (strain 972 / ATCC 24843) (Fission yeast).